Here is a 478-residue protein sequence, read N- to C-terminus: POU domain, class 2, transcription factor 2 (478 aa).

Disordered stretches follow at residues 1–82 (MVHS…PPQA), 167–199 (QAVTRPTLSDPHLSHPQPPKCLEPPSHPEEASD), 275–298 (SSLPSPNQLSRPSLGFDGLPGRRR), 357–391 (PCSAAPMLPSPGKPASYSPHLVTPQGGAGTLPLSQ), and 409–478 (TLHP…PYQP). Basic and acidic residues predominate over residues 12-37 (RMSKPLEAEKQGLDSPSEHTDTERNG). The span at 38-60 (PDTNHQNPQNKTSPFSVSPTGPS) shows a compositional bias: polar residues. The POU-specific domain maps to 195–269 (EEASDLEELE…LLEKWLNDAE (75 aa)). Over residues 275 to 285 (SSLPSPNQLSR) the composition is skewed to polar residues. Residues 297-356 (RRKKRTSIETNVRFALEKSFLANQKPTSEEILLIAEQLHMEKEVIRVWFCNRRQKEKRIN) constitute a DNA-binding region (homeobox). The tract at residues 389–410 (LSQASSSLSTTVTTLSSAVGTL) is leucine-zipper. The segment covering 416 to 425 (AGGGAAGGGA) has biased composition (gly residues).

This sequence belongs to the POU transcription factor family. Class-2 subfamily. Interacts with NR3C1, AR and PGR. Interacts with POU2AF1; the interaction increases POU2F2 transactivation activity. In terms of tissue distribution, predominantly expressed in B-cells.

It localises to the nucleus. Transactivation activity is enhanced by transcriptional coactivator POU2AF1. Transcription factor that specifically binds to the octamer motif (5'-ATTTGCAT-3'). Regulates IL6 expression in B cells with POU2AF1. Regulates transcription in a number of tissues in addition to activating immunoglobulin gene expression. Modulates transcription transactivation by NR3C1, AR and PGR. This chain is POU domain, class 2, transcription factor 2 (POU2F2), found in Sus scrofa (Pig).